A 77-amino-acid polypeptide reads, in one-letter code: Small ribosomal subunit protein bS16 (77 aa).

The protein belongs to the bacterial ribosomal protein bS16 family.

The sequence is that of Small ribosomal subunit protein bS16 from Helicobacter hepaticus (strain ATCC 51449 / 3B1).